Reading from the N-terminus, the 420-residue chain is Torsin-4A-A (420 aa).

A helical membrane pass occupies residues 130-150; the sequence is CLLLFIGIVCFQILNAIENLD. Residue 202–209 participates in ATP binding; sequence GPSGVGKS.

This sequence belongs to the ClpA/ClpB family. Torsin subfamily.

The protein resides in the membrane. The polypeptide is Torsin-4A-A (tor4a-a) (Xenopus laevis (African clawed frog)).